The following is a 306-amino-acid chain: Follistatin-related protein 1 (306 aa).

A signal peptide spans 1–18 (MWKRWLALSLVTIALVHG). Residues 28–51 (ICANVFCGAGRECAVTEKGEPTCL) form the Follistatin-like domain. 5 disulfide bridges follow: Cys-29–Cys-40, Cys-34–Cys-50, Cys-52–Cys-82, Cys-56–Cys-75, and Cys-64–Cys-96. A Kazal-like domain is found at 46-98 (GEPTCLCIEQCKPHKRPVCGSNGKTYLNHCELHRDACLTGSKIQVDYDGHCKE). Asn-142 carries N-linked (GlcNAc...) asparagine glycosylation. An EF-hand 1 domain is found at 142–176 (NYSEILDKYFKSFDNGDSHLDSSEFLKFVEQNETA). Ser-163 carries the phosphoserine modification. Residues Asn-173 and Asn-178 are each glycosylated (N-linked (GlcNAc...) asparagine). The EF-hand 2 domain maps to 191-226 (LRSLCVDALIELSDENADWKLSFQEFLKCLNPSFNP). The VWFC domain maps to 231-285 (CALEDETYADGAETEVDCNRCVCSCGHWVCTAMTCDGKNQKGVQTHTEEEKTGYV).

As to quaternary structure, homodimer. Interacts with SCN10A. Interacts with DIP2A; DIP2A may act as a cell surface receptor for FSTL1. Interacts with BMP4. Interacts with CD14; this interaction promotes TL4-mediated signaling cascade. In terms of tissue distribution, during central nervous system development, strongly expressed in the telencephalon, diencephalon, brainstem, limbic system and spinal cord. Widely expressed in all organs.

It is found in the secreted. Functionally, secreted glycoprotein that is involved in various physiological processes, such as angiogenesis, regulation of the immune response, cell proliferation and differentiation. Plays a role in the development of the central nervous system, skeletal system, lungs, and ureter. Promotes endothelial cell survival, migration and differentiation into network structures in an AKT-dependent manner. Also promotes survival of cardiac myocytes. Initiates various signaling cascades by activating different receptors on the cell surface such as DIP2A, TLR4 or BMP receptors. In Mus musculus (Mouse), this protein is Follistatin-related protein 1 (Fstl1).